The sequence spans 831 residues: MRVPVSWLREYVALPAEATARELADKLISLGLEVETVEEVGADISGPIVVGRVLTIEELTGFKKPIRFCTVDVGDANGTGEPQGIICGARNFAEGDLVVVSLPGAVLPGGFAISARKTYGRMSEGMICSASELGLWEDHEGIIVLPEGFAEPGTKADDLLGLRESVLDIAVTPDRGYALSLRGIAREVAAAYGVEFTDPAVRPLPSAAEGGYPASVADPAICSRYVLRGVTGFDPAAPTPLWMRRRLHLCGVRSISLAVDITNYVMLELGQPLHAWDRSTLRGPIEVRLARPGEKLETLDHVVRALDPDDILITDESGPINIAGVMGGLSTEIRETSTDILIEAAHFDAAHIARTSRRHQLSSESSRRFERGVDTDIQLAAATRAVELLAELGGATIEDGITHIDHTVPREPIVVRAGHAGRVAGVDYPVETEIARLRQVGCEVVQEGDTLKVTPPSWRPDLTDPNDLAEEVIRNEGYENIPALLPQAPPGRGLTRGQRLRRAVGRTLADRGFFEVLNYPFVGVRDFDRLRLDEDDARRTAVRLANPLNDDEPLLRTTLLPGLFKALVRNVGRGFTDIALFEMGLVYHPKPDAPAKAPILPVDRAPTAEERATLEAALPEQPRHIGAVLAGQRLRSGWWGGGEPATWADAIHTAKEAASVAGVELIVRAAQYAPWHPGRCAALYVADGDREVLVGHAGELHPRVIKAYGLPSRTSALEIDWDRIEAAAAAATAPQISTYPVATQDVALVVDASVPAAEVEAALREGAGELLESVRLFDVYTGDQVGEGRKSLAYALRLRAHDRTLTVEETNRIKDAAVAAAAERTGAVLRG.

Residues Ala-42–Asp-157 form the tRNA-binding domain. A B5 domain is found at Val-408–Ala-483. Residues Asp-461, Asp-467, Glu-470, and Glu-471 each coordinate Mg(2+). Residues Ser-737–Arg-830 form the FDX-ACB domain.

It belongs to the phenylalanyl-tRNA synthetase beta subunit family. Type 1 subfamily. Tetramer of two alpha and two beta subunits. The cofactor is Mg(2+).

The protein localises to the cytoplasm. The enzyme catalyses tRNA(Phe) + L-phenylalanine + ATP = L-phenylalanyl-tRNA(Phe) + AMP + diphosphate + H(+). The polypeptide is Phenylalanine--tRNA ligase beta subunit (Thermobifida fusca (strain YX)).